The sequence spans 267 residues: 4-hydroxy-tetrahydrodipicolinate reductase (267 aa).

10–15 (GCLGKQ) lines the NAD(+) pocket. R37 lines the NADP(+) pocket. NAD(+)-binding positions include 99–101 (GTT) and 122–125 (TTNV). The active-site Proton donor/acceptor is the H154. Position 155 (H155) interacts with (S)-2,3,4,5-tetrahydrodipicolinate. Residue K158 is the Proton donor of the active site. Position 164 to 165 (164 to 165 (GT)) interacts with (S)-2,3,4,5-tetrahydrodipicolinate.

This sequence belongs to the DapB family.

Its subcellular location is the cytoplasm. The catalysed reaction is (S)-2,3,4,5-tetrahydrodipicolinate + NAD(+) + H2O = (2S,4S)-4-hydroxy-2,3,4,5-tetrahydrodipicolinate + NADH + H(+). It carries out the reaction (S)-2,3,4,5-tetrahydrodipicolinate + NADP(+) + H2O = (2S,4S)-4-hydroxy-2,3,4,5-tetrahydrodipicolinate + NADPH + H(+). Its pathway is amino-acid biosynthesis; L-lysine biosynthesis via DAP pathway; (S)-tetrahydrodipicolinate from L-aspartate: step 4/4. Catalyzes the conversion of 4-hydroxy-tetrahydrodipicolinate (HTPA) to tetrahydrodipicolinate. This Ehrlichia canis (strain Jake) protein is 4-hydroxy-tetrahydrodipicolinate reductase.